A 296-amino-acid polypeptide reads, in one-letter code: Light-independent protochlorophyllide reductase iron-sulfur ATP-binding protein (296 aa).

Residues 39–44 (GIGKST) and K68 each bind ATP. Position 43 (S43) interacts with Mg(2+). [4Fe-4S] cluster-binding residues include C124 and C158. Position 209–210 (209–210 (NR)) interacts with ATP.

It belongs to the NifH/BchL/ChlL family. In terms of assembly, homodimer. Protochlorophyllide reductase is composed of three subunits; ChlL, ChlN and ChlB. It depends on [4Fe-4S] cluster as a cofactor.

It carries out the reaction chlorophyllide a + oxidized 2[4Fe-4S]-[ferredoxin] + 2 ADP + 2 phosphate = protochlorophyllide a + reduced 2[4Fe-4S]-[ferredoxin] + 2 ATP + 2 H2O. Its pathway is porphyrin-containing compound metabolism; chlorophyll biosynthesis (light-independent). Functionally, component of the dark-operative protochlorophyllide reductase (DPOR) that uses Mg-ATP and reduced ferredoxin to reduce ring D of protochlorophyllide (Pchlide) to form chlorophyllide a (Chlide). This reaction is light-independent. The L component serves as a unique electron donor to the NB-component of the complex, and binds Mg-ATP. In Synechococcus sp. (strain WH7803), this protein is Light-independent protochlorophyllide reductase iron-sulfur ATP-binding protein.